Consider the following 161-residue polypeptide: UPF0225 protein HI_0277 (161 aa).

Belongs to the UPF0225 family.

The polypeptide is UPF0225 protein HI_0277 (Haemophilus influenzae (strain ATCC 51907 / DSM 11121 / KW20 / Rd)).